The chain runs to 553 residues: Hydroxylamine reductase (553 aa).

[2Fe-2S] cluster-binding residues include Cys-3, Cys-6, Cys-18, and Cys-25. Residues His-252, Glu-276, Cys-320, Cys-408, Cys-436, Cys-461, Glu-495, and Lys-497 each coordinate hybrid [4Fe-2O-2S] cluster. Cys-408 is subject to Cysteine persulfide.

The protein belongs to the HCP family. Requires [2Fe-2S] cluster as cofactor. The cofactor is hybrid [4Fe-2O-2S] cluster.

It is found in the cytoplasm. It catalyses the reaction A + NH4(+) + H2O = hydroxylamine + AH2 + H(+). Its function is as follows. Catalyzes the reduction of hydroxylamine to form NH(3) and H(2)O. This is Hydroxylamine reductase from Aliivibrio fischeri (strain MJ11) (Vibrio fischeri).